Reading from the N-terminus, the 161-residue chain is Allophycocyanin alpha chain 2 (161 aa).

Asparagine 71 carries the post-translational modification N4-methylasparagine. Cysteine 81 lines the (2R,3E)-phycocyanobilin pocket.

This sequence belongs to the phycobiliprotein family. As to quaternary structure, component of the phycobilisome. Heterodimer of an alpha and a beta chain. Contains one covalently linked bilin chromophore.

It is found in the cellular thylakoid membrane. Its function is as follows. Light-harvesting photosynthetic bile pigment-protein from the phycobiliprotein complex. Allophycocyanin has a maximum absorption at approximately 650 nanometers. The protein is Allophycocyanin alpha chain 2 (apcA2) of Microchaete diplosiphon (Fremyella diplosiphon).